A 241-amino-acid chain; its full sequence is MSVRKLSALSLSIGGVPLIPSVSLVAAANGESRDCHGTICHPVNEFCYVATERCHPCIEVCNNQTHNYDAFLCAKECSAYKTFEPLKAEMLDIQNTQQLILLLLTILLVLIALRCAFQFLRWLIGNRCFQKLMRRLQSKAYPHPATANGKDLNATTIQNLNAINHPGSDLERAQSQIYSVAGAAEGSVVTMTTPVSTRYPAENSTTPTTVMTEIGYGYDNQAMVVTPVSEKPSAATIPVAF.

An N-terminal signal peptide occupies residues 1–27 (MSVRKLSALSLSIGGVPLIPSVSLVAA). The Extracellular segment spans residues 28-98 (ANGESRDCHG…EMLDIQNTQQ (71 aa)). Disulfide bonds link Cys35–Cys47, Cys40–Cys54, Cys57–Cys77, and Cys61–Cys73. N-linked (GlcNAc...) asparagine glycosylation is present at Asn63. A helical transmembrane segment spans residues 99–119 (LILLLLTILLVLIALRCAFQF). The Cytoplasmic segment spans residues 120–241 (LRWLIGNRCF…PSAATIPVAF (122 aa)).

Interacts (via extracellular cysteine-rich domain) with egr (via secreted TNF-homology soluble form); forms heterohexamers when 3 copies associate with egr trimers. Interacts with Traf6/TRAF2 and veli (via PDZ domain). Post-translationally, N-glycosylated on Asn-63. Glycosylation regulates ligand binding, specifically reducing affinity for the TNF egr, thereby inhibiting activation of JNK signaling. Expressed in the adult midgut; under normal conditions expressed at lower levels than the other TNF receptor wgn.

It localises to the apical cell membrane. It is found in the cytoplasmic vesicle membrane. In terms of biological role, acts as a receptor for TNF-cytokine egr. Plays a role in activation of JNK signaling and is required for egr-induced apoptosis, including in wing imaginal discs during development. May also play an egr-independent role in cell proliferation. TNF receptor involved in triggering JNK-dependent proliferation of the enteroblast-enterocyte lineage in response to stress-induced release of egr by intestinal stem cells and enteroblasts. Involved in regulation of insulin production in response to dietary protein shortage keeping systemic growth in check. Activation in brain insulin producing cells through binding of egr released into the hemolymph in response to dietary amino acid shortage, results in JNK-dependent inhibition of insulin production. This is Tumor necrosis factor receptor superfamily member grnd from Drosophila melanogaster (Fruit fly).